The following is a 908-amino-acid chain: MINGRYQKEDVVNNNNNLNLNLIEKTLNDLTIKNNTNINNNNTNNKNTNYYNNNNFNNNNNNNNNNNNNNNNINNNNNNNKYLNNSHNNNNNNNNNNNNNNNNNNNNNNNEINNNNNNVLSHSSLSGKGGSTTYETTSYTTSITSSRDTGTISTSYESSSSSSSSSSSSLYDDDEYSDYSDSSDSIDSYVNHRQALSKSQQQQHLQQQQDQPQPLHSSMGAISNEKPPSPTNQQQQQQHHHPKHNIELPKTSSFGLQPNSSIPHKKSRSDFDFIRTIGKGAYGKVKLVIEKETQLIFASKILNKKLIIKEKKAKYVNTEKTILDSLDNPNIVKLFYTFQDENNLYFILEYCPNGDLLGALKKAGCFSIDVVRFYAAEILIALEYLHGKGIAHRDLKPENILLGKNQHLKLSDFGSAKQLSIGSHHKGSRSGSFCGTAEYVCPELLTEKSAGVEADIWSYGCLLYQLVSGKLPFKGFNEYQTFLLITKREFSYPDNFDKCCMNLIDQLLDLDPYKRPTISEIKNHEFFSSIQDWSSIPSQTPPPIEQMVPQSPFPSPNSSLRLKKRSLSVGSPINSSLTYLSQPPIKPLNLDNSNIDYNDFENNQIISNNNNNNNNTTTTTTTTTTSANTSGSTNNTLYFTSPNVTSPPTSMSSNNTPRYINPLPTQSTTTTTTKPAYSSTPSSTILKSTPPPPILSSCSSNNLLGKSSNQQYQPFQFHQQQQQQQQQQQRERSSTTTPSPTFLSNHHNQHQKNLQQSFSSIDKSSFSTSSPMSSPRILLKPTELVLMDKDRKRNIREQQQIDQYQWSRFLLPNDEIILACGITEKRSGLITKKRQLIITDTPRIFYVDPVKMTQKGEITVDGSLSAQQKSSKHFIINSKGRSRHFYDLDGQSKLWVDLINELNMLSFK.

Composition is skewed to low complexity over residues 53–170 (NNNF…SSSL), 179–189 (YSDSSDSIDSY), and 200–216 (QQQQ…QPLH). The interval 53-267 (NNNFNNNNNN…PNSSIPHKKS (215 aa)) is disordered. The span at 250 to 262 (KTSSFGLQPNSSI) shows a compositional bias: polar residues. In terms of domain architecture, Protein kinase spans 271 to 527 (FDFIRTIGKG…ISEIKNHEFF (257 aa)). ATP-binding positions include 281 to 283 (AYG) and Lys300. Residues 302-346 (LNKKLIIKEKKAKYVNTEKTILDSLDNPNIVKLFYTFQDENNLYF) form a PIF-pocket region. ATP-binding positions include 349–351 (EYC) and Asp355. Asp394 functions as the Proton acceptor in the catalytic mechanism. Positions 398 and 412 each coordinate ATP. Disordered stretches follow at residues 538-560 (SQTP…NSSL) and 606-755 (ISNN…KNLQ). Residues 607-684 (SNNNNNNNNT…PAYSSTPSST (78 aa)) are compositionally biased toward low complexity. Residues 696 to 709 (SSCSSNNLLGKSSN) are compositionally biased toward polar residues. A compositionally biased stretch (low complexity) spans 710–741 (QQYQPFQFHQQQQQQQQQQQRERSSTTTPSPT). Residues 764 to 902 (SSFSTSSPMS…KLWVDLINEL (139 aa)) form the PH domain.

The protein belongs to the protein kinase superfamily. AGC Ser/Thr protein kinase family. PDPK1 subfamily.

It catalyses the reaction L-seryl-[protein] + ATP = O-phospho-L-seryl-[protein] + ADP + H(+). The catalysed reaction is L-threonyl-[protein] + ATP = O-phospho-L-threonyl-[protein] + ADP + H(+). This chain is 3-phosphoinositide-dependent protein kinase B (pdkB), found in Dictyostelium discoideum (Social amoeba).